The primary structure comprises 126 residues: Acyl carrier protein 2, mitochondrial (126 aa).

The N-terminal 36 residues, 1–36 (MAARGAMLRYLRVNVNPTIQNPRECVLPFSILLRRF), are a transit peptide targeting the mitochondrion. In terms of domain architecture, Carrier spans 48 to 123 (SEVTDRVLSV…LAVDFIASHP (76 aa)). Ser83 is subject to O-(pantetheine 4'-phosphoryl)serine.

It belongs to the acyl carrier protein (ACP) family. Complex I is composed of at least 49 different subunits. In terms of processing, 4'-phosphopantetheine is transferred from CoA to a specific serine of the apo-ACP-like protein.

It localises to the mitochondrion. Its pathway is lipid metabolism; fatty acid biosynthesis. Its function is as follows. Carrier of the growing fatty acid chain in fatty acid biosynthesis. May be involved in the synthesis of short and medium chain fatty acids. Accessory and non-catalytic subunit of the mitochondrial membrane respiratory chain NADH dehydrogenase (Complex I), which functions in the transfer of electrons from NADH to the respiratory chain. The chain is Acyl carrier protein 2, mitochondrial (MTACP2) from Arabidopsis thaliana (Mouse-ear cress).